Consider the following 159-residue polypeptide: Regulatory protein RecX (159 aa).

Belongs to the RecX family.

The protein resides in the cytoplasm. Its function is as follows. Modulates RecA activity. The protein is Regulatory protein RecX of Chlorobium limicola (strain DSM 245 / NBRC 103803 / 6330).